The chain runs to 424 residues: CinA-like protein (424 aa).

This sequence belongs to the CinA family.

This Shewanella baltica (strain OS195) protein is CinA-like protein.